Here is a 294-residue protein sequence, read N- to C-terminus: Lycopene elongase/hydratase (294 aa).

8 helical membrane-spanning segments follow: residues 31–51 (FWLY…DGPG), 53–73 (LFSP…NVFL), 115–135 (LALL…LAWM), 160–180 (GLYI…APPA), 182–202 (AVVG…IPDI), 222–242 (TYYY…FTHW), 243–263 (VFGV…GVGV), and 274–294 (AINT…MLYG).

This sequence belongs to the UbiA prenyltransferase family.

The protein resides in the cell membrane. It catalyses the reaction all-trans-lycopene + dimethylallyl diphosphate + H2O = dihydroisopentenyldehydrorhodopin + diphosphate. The catalysed reaction is isopentenyldehydrorhodopin + dimethylallyl diphosphate + H2O = dihydrobisanhydrobacterioruberin + diphosphate. It participates in carotenoid biosynthesis. In terms of biological role, involved in the biosynthesis of the acyclic C50 carotenoid bacterioruberin (BR). Acts as a bifunctional elongase/hydratase that catalyzes the elongation of lycopene by attaching a C(5) isoprene unit at C-2, as well as the hydroxylation of the previous end of the molecule. The enzyme acts at both ends of the substrate, and catalyzes the conversion of lycopene to the C(45) intermediate dihydroisopentenyldehydrorhodopin (DH-IDR) and the conversion of isopentenyldehydrorhodopin (IDR) to the C(50) carotenoid dihydrobisanhydrobacterioruberin (DH-BABR). Can also catalyze the conversion of lycopene to tetrahydrobisanhydrobacterioruberin (TH-BABR). This chain is Lycopene elongase/hydratase, found in Haloarcula japonica (strain ATCC 49778 / DSM 6131 / JCM 7785 / NBRC 101032 / NCIMB 13157 / TR-1).